Reading from the N-terminus, the 219-residue chain is Ras-related protein Rab-32A (219 aa).

Residue glycine 22–threonine 29 coordinates GTP. The short motif at tyrosine 44–phenylalanine 52 is the Effector region element. GTP contacts are provided by residues aspartate 71–glutamine 75 and asparagine 134–aspartate 137. The tract at residues asparagine 192–lysine 219 is disordered. The span at lysine 206–lysine 219 shows a compositional bias: polar residues. 2 S-geranylgeranyl cysteine lipidation sites follow: cysteine 217 and cysteine 218.

The protein belongs to the small GTPase superfamily. Rab family.

In Dictyostelium discoideum (Social amoeba), this protein is Ras-related protein Rab-32A (rab32A).